The chain runs to 521 residues: Potassium/proton antiporter CemA (521 aa).

Transmembrane regions (helical) follow at residues 68-88 (FVFIIYWSVLECKTSIYLLNI), 294-314 (ALASLQYLGCLILIPWGISFP), 399-419 (ILHLLTDIIYFAIPSASFISG), 446-466 (ILLLTDSCIGFHSPHGWEILI), and 481-501 (IISCFVSTFPVISDTVFKYWI).

This sequence belongs to the CemA family.

It localises to the plastid. The protein resides in the chloroplast inner membrane. The enzyme catalyses K(+)(in) + H(+)(out) = K(+)(out) + H(+)(in). In terms of biological role, contributes to K(+)/H(+) antiport activity by supporting proton efflux to control proton extrusion and homeostasis in chloroplasts in a light-dependent manner to modulate photosynthesis. Prevents excessive induction of non-photochemical quenching (NPQ) under continuous-light conditions. Indirectly promotes efficient inorganic carbon uptake into chloroplasts. This is Potassium/proton antiporter CemA from Huperzia lucidula (Shining clubmoss).